A 150-amino-acid polypeptide reads, in one-letter code: Large ribosomal subunit protein bL9 (150 aa).

Belongs to the bacterial ribosomal protein bL9 family.

Binds to the 23S rRNA. In Alcanivorax borkumensis (strain ATCC 700651 / DSM 11573 / NCIMB 13689 / SK2), this protein is Large ribosomal subunit protein bL9.